Here is a 344-residue protein sequence, read N- to C-terminus: L-rhamnose-proton symporter (344 aa).

10 helical membrane passes run 4 to 24, 38 to 58, 68 to 88, 101 to 121, 137 to 157, 175 to 195, 214 to 234, 259 to 279, 290 to 310, and 323 to 343; these read AITM…CFYA, WSVG…ALLL, FSLS…IGNI, MGIG…TPII, TLLG…AGQL, LVLA…MNAA, LPSY…FCFI, VLLS…YAWG, ISWM…GLVL, and VLSL…IGMA.

It belongs to the L-rhamnose transporter (TC 2.A.7.6) family.

The protein resides in the cell inner membrane. The catalysed reaction is L-rhamnopyranose(in) + H(+)(in) = L-rhamnopyranose(out) + H(+)(out). Functionally, uptake of L-rhamnose across the cytoplasmic membrane with the concomitant transport of protons into the cell (symport system). This Shigella flexneri protein is L-rhamnose-proton symporter.